Reading from the N-terminus, the 196-residue chain is Small ribosomal subunit protein uS4c (196 aa).

The disordered stretch occupies residues leucine 15–leucine 36. The S4 RNA-binding domain maps to methionine 89 to asparagine 150.

Belongs to the universal ribosomal protein uS4 family. Part of the 30S ribosomal subunit. Contacts protein S5. The interaction surface between S4 and S5 is involved in control of translational fidelity.

The protein resides in the plastid. The protein localises to the chloroplast. Functionally, one of the primary rRNA binding proteins, it binds directly to 16S rRNA where it nucleates assembly of the body of the 30S subunit. With S5 and S12 plays an important role in translational accuracy. This is Small ribosomal subunit protein uS4c (rps4) from Yucca filamentosa (Bear-grass).